Reading from the N-terminus, the 925-residue chain is Glutamate receptor 3.1 (925 aa).

A signal peptide spans M1 to G25. Topologically, residues A26 to T591 are extracellular. N309, N341, N359, N419, N437, and N488 each carry an N-linked (GlcNAc...) asparagine glycan. The helical transmembrane segment at L592 to L612 threads the bilayer. The Cytoplasmic portion of the chain corresponds to E613 to R621. A helical transmembrane segment spans residues G622–S642. Over H643–R653 the chain is Cytoplasmic. A helical transmembrane segment spans residues M654–L674. Residues T675–S831 lie on the Extracellular side of the membrane. N-linked (GlcNAc...) asparagine glycans are attached at residues N738 and N812. Residues F832–F852 traverse the membrane as a helical segment. The Cytoplasmic portion of the chain corresponds to K853–I925. Residues K897 to I925 are disordered. Polar residues predominate over residues H908–T919.

This sequence belongs to the glutamate-gated ion channel (TC 1.A.10.1) family. In terms of assembly, may form heteromers. Expressed predominantly in roots. Firt detected in the vascular tissues of the cotyledons, and later in the vasculature of all organs. In leaves, preferentially expressed in guard cells.

Its subcellular location is the membrane. Glutamate-gated receptor that probably acts as a non-selective cation channel. May be involved in light-signal transduction and calcium homeostasis via the regulation of calcium influx into cells. Required for the long-term calcium oscillation-regulated stomatal movements. This chain is Glutamate receptor 3.1 (GLR3.1), found in Arabidopsis thaliana (Mouse-ear cress).